The chain runs to 605 residues: Exo-beta-1,3-glucanase (605 aa).

The interval 1 to 23 (MHVPPTDPARSAPPASPHRRRRP) is disordered. The first 44 residues, 1–44 (MHVPPTDPARSAPPASPHRRRRPKALGLTALAAAMLMAVPTTQA), serve as a signal peptide directing secretion. Substrate-binding positions include Q174, 194–196 (YGW), Q217, 446–449 (WRAD), and 480–481 (EH). E502 functions as the Proton donor in the catalytic mechanism. Y505 is a substrate binding site.

Belongs to the glycosyl hydrolase 55 family.

Its subcellular location is the secreted. It carries out the reaction Successive hydrolysis of beta-D-glucose units from the non-reducing ends of (1-&gt;3)-beta-D-glucans, releasing alpha-glucose.. Exo-beta-1,3-glucanase that specifically hydrolyzes laminarin and laminarioligosaccharides, producing glucose and laminaribiose as end products. This Streptomyces sp. (strain SirexAA-E / ActE) protein is Exo-beta-1,3-glucanase.